The sequence spans 70 residues: Melittin (70 aa).

Positions Met-1–Ala-21 are cleaved as a signal peptide. A propeptide spans Ala-22–Ala-43 (removed by a dipeptidylpeptidase). At Gly-44 the chain carries N-formylglycine; partial. The residue at position 69 (Gln-69) is a Glutamine amide.

This sequence belongs to the melittin family. As to quaternary structure, monomer (in solution and for integration into membranes), homotetramer (in solution and potentially as a toroidal pore in membranes), and potenially homomultimer (as a toroidal pore in membranes). Expressed by the venom gland.

Its subcellular location is the secreted. The protein resides in the target cell membrane. In terms of biological role, melittin: Main toxin of bee venom with strong antimicrobial activity and hemolytic activity. It has enhancing effects on bee venom phospholipase A2 activity. This amphipathic toxin binds to negatively charged membrane surface and forms pore by inserting into lipid bilayers inducing the leakage of ions and molecules and the enhancement of permeability that ultimately leads to cell lysis. It acts as a voltage-gated pore with higher selectivity for anions over cations. The ion conductance has been shown to be voltage-dependent. Self-association of melittin in membranes is promoted by high ionic strength, but not by the presence of negatively charged lipids. In vivo, intradermal injection into healthy human volunteers produce sharp pain sensation and an inflammatory response. It produces pain by activating primary nociceptor cells directly and indirectly due to its ability to activate plasma membrane phospholipase A2 and its pore-forming activity. In the context of inflammation and cancer tests, is highly cytotoxic to normal cells, highly induces calcium signaling and almost completely prevents cAMP production. In addition, prevents LPS-induced nitric oxid (NO) synthesis but does not affect the IP3 signaling and pro-inflammatory activation of endothelial cells. Also shows significant antiproliferative activity on the breast cancer cell line MDA-MB-231. Melittin-S: 1.4-fold less hemolytic and adopts a less organized secondary structure than melittin. Its function is as follows. Melittin-2: Has strong hemolytic activity. This chain is Melittin (MELT), found in Apis mellifera (Honeybee).